We begin with the raw amino-acid sequence, 289 residues long: UPF0276 protein BP2925 (289 aa).

This sequence belongs to the UPF0276 family.

The chain is UPF0276 protein BP2925 from Bordetella pertussis (strain Tohama I / ATCC BAA-589 / NCTC 13251).